We begin with the raw amino-acid sequence, 143 residues long: Transcriptional regulator MraZ (143 aa).

2 consecutive SpoVT-AbrB domains span residues 5 to 47 (TYAP…SQRE) and 76 to 119 (ASAE…DAEA).

Belongs to the MraZ family. As to quaternary structure, forms oligomers.

It localises to the cytoplasm. Its subcellular location is the nucleoid. The chain is Transcriptional regulator MraZ from Leifsonia xyli subsp. xyli (strain CTCB07).